We begin with the raw amino-acid sequence, 137 residues long: Outer membrane protein assembly factor BamE (137 aa).

Residues 1–18 form the signal peptide; the sequence is MQVKTLLGATFLALSLAS. Cys-19 carries the N-palmitoyl cysteine lipid modification. Cys-19 carries the S-diacylglycerol cysteine lipid modification.

It belongs to the BamE family. In terms of assembly, part of the Bam complex.

It is found in the cell outer membrane. Functionally, part of the outer membrane protein assembly complex, which is involved in assembly and insertion of beta-barrel proteins into the outer membrane. The protein is Outer membrane protein assembly factor BamE of Haemophilus influenzae (strain ATCC 51907 / DSM 11121 / KW20 / Rd).